Reading from the N-terminus, the 240-residue chain is Oxygen-insensitive NADPH nitroreductase (240 aa).

Residues 11-15 (HRSIR), serine 39, glutamine 67, 128-131 (YIGG), and 167-169 (KPR) each bind FMN.

It belongs to the flavin oxidoreductase frp family. Homodimer. FMN serves as cofactor.

Catalyzes the reduction of nitroaromatic compounds using NADPH. Has a broad electron acceptor specificity. Reduces nitrofurazone by a ping-pong bi-bi mechanism possibly to generate a two-electron transfer product. This is Oxygen-insensitive NADPH nitroreductase (nfsA) from Salmonella typhimurium (strain LT2 / SGSC1412 / ATCC 700720).